The following is a 624-amino-acid chain: uncharacterized protein (624 aa).

The tract at residues proline 108–tyrosine 138 is disordered. A Phosphoserine modification is found at serine 112. Over residues glutamate 115–tyrosine 138 the composition is skewed to polar residues. Serine 205 bears the Phosphoserine mark. Disordered stretches follow at residues leucine 217–arginine 236 and lysine 305–glutamate 329.

This is an uncharacterized protein from Rattus norvegicus (Rat).